A 54-amino-acid polypeptide reads, in one-letter code: H-bracotoxin-Cf4 (54 aa).

Positions 1–21 are cleaved as a signal peptide; it reads MSKLFIFFLLVALLAFVSSEA. Cystine bridges form between Cys-24–Cys-39, Cys-31–Cys-43, and Cys-38–Cys-53.

In terms of tissue distribution, expressed by the venom duct.

It is found in the secreted. Its function is as follows. This endoparasitoid wasp peptide has a role in disruption of the cellular host immune response, since it reduces the capacity of D.saccharalis hemocytes to encapsulate foreign bodies. On the other hand, it shows no effect on the humoral immune response, since it has no effect on phenoloxidase activity. This is H-bracotoxin-Cf4 from Cotesia flavipes (Parasitic wasp).